Here is a 468-residue protein sequence, read N- to C-terminus: 6-phosphogluconate dehydrogenase, decarboxylating (468 aa).

NADP(+) contacts are provided by residues Gly10 to Gly15, Asn33 to Ser35, Val74 to Ala76, and Asn102. Substrate-binding positions include Asn102 and Ser128–Gly130. Catalysis depends on Lys183, which acts as the Proton acceptor. His186–Asn187 serves as a coordination point for substrate. Glu190 acts as the Proton donor in catalysis. Substrate-binding residues include Tyr191, Lys260, Arg287, Arg445, and His451.

It belongs to the 6-phosphogluconate dehydrogenase family. Homodimer.

It catalyses the reaction 6-phospho-D-gluconate + NADP(+) = D-ribulose 5-phosphate + CO2 + NADPH. The protein operates within carbohydrate degradation; pentose phosphate pathway; D-ribulose 5-phosphate from D-glucose 6-phosphate (oxidative stage): step 3/3. Functionally, catalyzes the oxidative decarboxylation of 6-phosphogluconate to ribulose 5-phosphate and CO(2), with concomitant reduction of NADP to NADPH. This is 6-phosphogluconate dehydrogenase, decarboxylating (gnd) from Shigella flexneri.